The chain runs to 585 residues: METFKRLKMYYWPYRKVFMWSLLAMLLMTAITVVYPIILQITIDEIVLGRQYQLAAWVSLGFIAVMVLKGMATFFHQYLGDMFGIKSVYRLRNGLYEKLQRLSFSYYDNAKTGDLMSRLTADVEGLRFFLSYGLAELIRFGLLVAISLSVMFYYSVPLTLVTIAVLPFLAVAVYRFDKRVHPAFRGIRKSFAKLNTKVQENISGINTVKSLSREDFQISTFNKANAEYRAQYLQTSSIWSAYFPLMEFIGNTCIVALLSYGGYLVMQNQLNPGELVAFFSLVNYMMWPIMNLGFVINMFSQAKASGERLLDILEKEEDITDHPHALHKQKLTGDVHFKNVSLAYGKEQTNALCNVSFEANSGKVIGLLGPTGSGKSSVTQLLTRFYSPVGGMITIDHKPITDYSLKTLRSNIGVVLQESFLFSSTIRSNISYGRPDASMEDVIEAAKRAQAHNFIMELPDGYDTMLGERGMGLSGGQKQRIAIARAICLNPSILILDDATSAVDMQTEHSIQLALKEVMKNRTTFIVAHRISSLKHADEILVFNKGRIRERGTHHELLEKGGYYKKIYDLQYRDVKMINEPHEVG.

6 consecutive transmembrane segments (helical) span residues 18 to 38, 55 to 75, 128 to 148, 150 to 170, 238 to 258, and 276 to 296; these read FMWS…YPII, AAWV…ATFF, FFLS…AISL, VMFY…PFLA, IWSA…VALL, and VAFF…GFVI. An ABC transmembrane type-1 domain is found at 18–301; the sequence is FMWSLLAMLL…LGFVINMFSQ (284 aa). The 236-residue stretch at 335–570 folds into the ABC transporter domain; that stretch reads VHFKNVSLAY…GGYYKKIYDL (236 aa). 369-376 provides a ligand contact to ATP; sequence GPTGSGKS.

This sequence belongs to the ABC transporter superfamily.

Its subcellular location is the cell membrane. This is an uncharacterized protein from Bacillus subtilis (strain 168).